Consider the following 154-residue polypeptide: Putative thioredoxin H10 (154 aa).

The region spanning 24–148 (NNNNSYGQTR…LQKKTAAAAD (125 aa)) is the Thioredoxin domain. Residues Cys-74 and Cys-77 each act as nucleophile in the active site. Cys-74 and Cys-77 are joined by a disulfide.

It belongs to the thioredoxin family.

The protein resides in the cytoplasm. Its function is as follows. Probable thiol-disulfide oxidoreductase that may be involved in the redox regulation of a number of cytosolic enzymes. The protein is Putative thioredoxin H10 of Arabidopsis thaliana (Mouse-ear cress).